A 172-amino-acid polypeptide reads, in one-letter code: Putative phosphoesterase BAMEG_3349 (172 aa).

Catalysis depends on histidine 34, which acts as the Proton donor. Short sequence motifs (HXTX) lie at residues 34-37 (HITL) and 115-118 (HLTI). Histidine 115 serves as the catalytic Proton acceptor.

It belongs to the 2H phosphoesterase superfamily. YjcG family.

In Bacillus anthracis (strain CDC 684 / NRRL 3495), this protein is Putative phosphoesterase BAMEG_3349.